The primary structure comprises 78 residues: Ubiquinol-cytochrome-c reductase complex assembly factor 3 (78 aa).

Residues 1–5 (MSGMR) lie on the Mitochondrial matrix side of the membrane. The helical transmembrane segment at 6–26 (ILTGSVALGGLTYAIWIIFSP) threads the bilayer. Residues 27–78 (GEERKKEILKSLPEANPVRMEETRKRNAIMLQVLKDAAETNDNIARGFGSQK) lie on the Mitochondrial intermembrane side of the membrane.

This sequence belongs to the UQCC3 family. Associates with the ubiquinol-cytochrome c reductase complex (mitochondrial respiratory chain complex III or cytochrome b-c1 complex).

Its subcellular location is the mitochondrion inner membrane. Required for the assembly of the ubiquinol-cytochrome c reductase complex (mitochondrial respiratory chain complex III or cytochrome b-c1 complex), mediating cytochrome b recruitment and probably stabilization within the complex. Thereby, plays an important role in ATP production by mitochondria. Cardiolipin-binding protein, it may also control the cardiolipin composition of mitochondria membranes and their morphology. This is Ubiquinol-cytochrome-c reductase complex assembly factor 3 from Danio rerio (Zebrafish).